Here is a 464-residue protein sequence, read N- to C-terminus: Arginine biosynthesis bifunctional protein ArgJ, mitochondrial (464 aa).

A mitochondrion-targeting transit peptide spans 1–22; that stretch reads MAASFKALPQQLTLTRSFARCY. The substrate site is built by Thr-193, Lys-222, Thr-233, Glu-320, Asn-459, and Thr-464. The active-site Nucleophile is Thr-233.

This sequence belongs to the ArgJ family. In terms of assembly, heterodimer of an alpha and a beta chain. In terms of processing, the alpha and beta chains are autoproteolytically processed from a single precursor protein within the mitochondrion.

Its subcellular location is the mitochondrion matrix. It carries out the reaction N(2)-acetyl-L-ornithine + L-glutamate = N-acetyl-L-glutamate + L-ornithine. It catalyses the reaction L-glutamate + acetyl-CoA = N-acetyl-L-glutamate + CoA + H(+). It functions in the pathway amino-acid biosynthesis; L-arginine biosynthesis; L-ornithine and N-acetyl-L-glutamate from L-glutamate and N(2)-acetyl-L-ornithine (cyclic): step 1/1. It participates in amino-acid biosynthesis; L-arginine biosynthesis; N(2)-acetyl-L-ornithine from L-glutamate: step 1/4. In terms of biological role, catalyzes two activities which are involved in the cyclic version of arginine biosynthesis: the synthesis of acetylglutamate from glutamate and acetyl-CoA, and of ornithine by transacetylation between acetylornithine and glutamate. The sequence is that of Arginine biosynthesis bifunctional protein ArgJ, mitochondrial from Verticillium alfalfae (strain VaMs.102 / ATCC MYA-4576 / FGSC 10136) (Verticillium wilt of alfalfa).